A 224-amino-acid polypeptide reads, in one-letter code: Orotate phosphoribosyltransferase (224 aa).

5-phospho-alpha-D-ribose 1-diphosphate is bound by residues Lys-26, 73 to 74 (YK), Arg-100, Lys-101, Lys-104, His-106, and 127 to 135 (EDVTTAGTS). 2 residues coordinate orotate: Thr-131 and Arg-160.

It belongs to the purine/pyrimidine phosphoribosyltransferase family. PyrE subfamily. Homodimer. Requires Mg(2+) as cofactor.

It carries out the reaction orotidine 5'-phosphate + diphosphate = orotate + 5-phospho-alpha-D-ribose 1-diphosphate. Its pathway is pyrimidine metabolism; UMP biosynthesis via de novo pathway; UMP from orotate: step 1/2. Catalyzes the transfer of a ribosyl phosphate group from 5-phosphoribose 1-diphosphate to orotate, leading to the formation of orotidine monophosphate (OMP). The protein is Orotate phosphoribosyltransferase of Clostridium acetobutylicum (strain ATCC 824 / DSM 792 / JCM 1419 / IAM 19013 / LMG 5710 / NBRC 13948 / NRRL B-527 / VKM B-1787 / 2291 / W).